A 212-amino-acid polypeptide reads, in one-letter code: Transmembrane emp24 domain-containing protein p24delta7 (212 aa).

The first 22 residues, 1–22, serve as a signal peptide directing secretion; sequence MNHRRSSIVLLILSILSPVTLS. Topologically, residues 23–179 are lumenal; the sequence is IRYELLSGHT…HNLNIATNSK (157 aa). A GOLD domain is found at 32-147; sequence TKCISEEIHA…VETMEFEVKK (116 aa). Positions 162 to 175 form a coiled coil; the sequence is LRDREEEMHNLNIA. Residue arginine 165 is modified to Omega-N-methylated arginine. Residues 180–200 traverse the membrane as a helical segment; sequence MAWLSFVSLAVCLSVAGLQFW. Residues 201–212 lie on the Cytoplasmic side of the membrane; it reads HLKTFFQKKKLI. The COPII vesicle coat-binding signature appears at 205 to 206; the sequence is FF. The COPI vesicle coat-binding signature appears at 205–212; the sequence is FFQKKKLI.

Belongs to the EMP24/GP25L family. As to quaternary structure, probably oligomerizes with other members of the EMP24/GP25L family. Associates with the COPI vesicle coat (coatomer). Associates with the COPII vesicle coat (coatomer).

It localises to the endoplasmic reticulum membrane. Its subcellular location is the golgi apparatus. It is found in the cis-Golgi network membrane. The protein localises to the golgi stack membrane. Functionally, involved in vesicular protein trafficking. Mainly functions in the early secretory pathway. Thought to act as cargo receptor at the lumenal side for incorporation of secretory cargo molecules into transport vesicles and to be involved in vesicle coat formation at the cytoplasmic side. In Arabidopsis thaliana (Mouse-ear cress), this protein is Transmembrane emp24 domain-containing protein p24delta7.